The chain runs to 419 residues: Serine/threonine-protein kinase Kist (419 aa).

Residues 23–303 enclose the Protein kinase domain; sequence WQVQSRLGSG…PAEMALCSPF (281 aa). ATP contacts are provided by residues 29 to 37 and lysine 54; that span reads LGSGSSASV. Residue aspartate 158 is the Proton acceptor of the active site. The RRM domain occupies 323 to 405; the sequence is LRLLNVLDDD…GKFVVATFYP (83 aa).

It belongs to the protein kinase superfamily. Ser/Thr protein kinase family. In terms of assembly, interacts with PAM and CDKN1B/p27Kip1. Interacts with stathmin.

It is found in the nucleus. It carries out the reaction L-seryl-[protein] + ATP = O-phospho-L-seryl-[protein] + ADP + H(+). The enzyme catalyses L-threonyl-[protein] + ATP = O-phospho-L-threonyl-[protein] + ADP + H(+). Its function is as follows. Upon serum stimulation, phosphorylates CDKN1B/p27Kip1, thus controlling CDKN1B subcellular location and cell cycle progression in G1 phase. May be involved in trafficking and/or processing of RNA. The chain is Serine/threonine-protein kinase Kist (Uhmk1) from Mus musculus (Mouse).